Here is a 420-residue protein sequence, read N- to C-terminus: WD repeat-containing protein 21 (420 aa).

Residues 73–75 (RQF) carry the DDB-boX motif. 3 WD repeats span residues 251-289 (QSKGDVFSLKYLGDNLVIAGCRNKSVLVYDLRTKKECVQ), 293-332 (HGSSICSMQNLDFSQPKLLVSGLESKISLYDCRFLQSKKR), and 341-383 (GHSN…PFKE).

It is found in the cytoplasm. It localises to the nucleus. In Schizosaccharomyces pombe (strain 972 / ATCC 24843) (Fission yeast), this protein is WD repeat-containing protein 21 (wdr21).